The primary structure comprises 164 residues: Rhomboid-related protein 1 (164 aa).

The next 4 membrane-spanning stretches (helical) occupy residues 10–30, 32–52, 56–76, and 120–140; these read GFNA…HGVL, ISLL…ITDM, VVGG…NVVM, and PSFM…LTIL. Catalysis depends on serine 60, which acts as the Nucleophile. The active site involves histidine 125.

This sequence belongs to the peptidase S54 family.

The protein resides in the membrane. It carries out the reaction Cleaves type-1 transmembrane domains using a catalytic dyad composed of serine and histidine that are contributed by different transmembrane domains.. In terms of biological role, may be involved in regulated intramembrane proteolysis and the subsequent release of functional polypeptides from their membrane anchors. The polypeptide is Rhomboid-related protein 1 (Rhbdl1) (Rattus norvegicus (Rat)).